The primary structure comprises 207 residues: Uridine kinase (207 aa).

13–20 (GASGSGKT) is a binding site for ATP.

This sequence belongs to the uridine kinase family.

The protein localises to the cytoplasm. It carries out the reaction uridine + ATP = UMP + ADP + H(+). The enzyme catalyses cytidine + ATP = CMP + ADP + H(+). It participates in pyrimidine metabolism; CTP biosynthesis via salvage pathway; CTP from cytidine: step 1/3. Its pathway is pyrimidine metabolism; UMP biosynthesis via salvage pathway; UMP from uridine: step 1/1. This Ureaplasma urealyticum serovar 10 (strain ATCC 33699 / Western) protein is Uridine kinase.